A 287-amino-acid polypeptide reads, in one-letter code: Inorganic pyrophosphatase (287 aa).

Arginine 79 lines the diphosphate pocket. Residues aspartate 116, aspartate 121, and aspartate 153 each contribute to the Mg(2+) site.

The protein belongs to the PPase family. The cofactor is Mg(2+).

Its subcellular location is the cytoplasm. The enzyme catalyses diphosphate + H2O = 2 phosphate + H(+). The chain is Inorganic pyrophosphatase (IPP1) from Candida glabrata (strain ATCC 2001 / BCRC 20586 / JCM 3761 / NBRC 0622 / NRRL Y-65 / CBS 138) (Yeast).